The sequence spans 215 residues: Probable transaldolase (215 aa).

The active-site Schiff-base intermediate with substrate is K83.

It belongs to the transaldolase family. Type 3B subfamily.

It is found in the cytoplasm. The enzyme catalyses D-sedoheptulose 7-phosphate + D-glyceraldehyde 3-phosphate = D-erythrose 4-phosphate + beta-D-fructose 6-phosphate. The protein operates within carbohydrate degradation; pentose phosphate pathway; D-glyceraldehyde 3-phosphate and beta-D-fructose 6-phosphate from D-ribose 5-phosphate and D-xylulose 5-phosphate (non-oxidative stage): step 2/3. Transaldolase is important for the balance of metabolites in the pentose-phosphate pathway. This chain is Probable transaldolase, found in Moorella thermoacetica (strain ATCC 39073 / JCM 9320).